Here is a 742-residue protein sequence, read N- to C-terminus: Feeding circuit activating peptides (742 aa).

Positions 1–22 (MTFAASFRALLCVLFCAALVHC) are cleaved as a signal peptide. A propeptide spanning residues 23 to 98 (KTRTKRYVPH…YGALADRDVD (76 aa)) is cleaved from the precursor. A propeptide spans 117-131 (GSLDAIPQDTDASSD) (connecting peptide). 20 propeptides span residues 164–168 (GSGAE), 202–220 (RGTG…PWGS), 236–253 (DTEL…TEVN), 271–275 (SGEAG), 293–297 (ADDQG), 315–321 (FDNSAGE), 339–341 (AGD), 359–366 (FDNDISGQ), 384–388 (SDQDN), 406–410 (ADDDG), 428–432 (ADEDD), 450–454 (GDEDD), 472–476 (ADEDD), 494–498 (SDEDD), 516–520 (SDEDD), 538–542 (ADEDD), 560–564 (NSPGL), 582–592 (NNEYYSGAENE), 610–614 (DQPGE), and 647–742 (NSAD…AGQM).

In terms of tissue distribution, expressed in pleural, pedal, abdominal, buccal and cerebral ganglia.

It localises to the secreted. Initiates organized rhythmic motor output of feeding circuit. The chain is Feeding circuit activating peptides from Aplysia californica (California sea hare).